Reading from the N-terminus, the 270-residue chain is Photosystem I chlorophyll a/b-binding protein 6, chloroplastic (270 aa).

A chloroplast-targeting transit peptide spans methionine 1–threonine 33. The interval serine 16 to threonine 36 is disordered. Residues arginine 19–threonine 36 are compositionally biased toward polar residues. Tryptophan 68 is a chlorophyll b binding site. The chlorophyll a site is built by phenylalanine 88 and glutamate 107. A chlorophyll b-binding site is contributed by arginine 112. A helical membrane pass occupies residues tyrosine 146–alanine 164. Residues glutamate 165 and arginine 168 each coordinate chlorophyll b. Chlorophyll a-binding residues include lysine 221, glutamate 222, asparagine 225, arginine 227, glutamine 239, and histidine 254. Residues leucine 228 to serine 244 form a helical membrane-spanning segment.

Belongs to the light-harvesting chlorophyll a/b-binding (LHC) protein family. As to quaternary structure, the LHC complex consists of chlorophyll a-b binding proteins. Homodimer. Binds pigments. Element of the NAD(P)H dehydrogenase-photosystem I supercomplex (NDH-PSI). Binds at least 14 chlorophylls (8 Chl-a and 6 Chl-b) and carotenoids such as lutein and neoxanthin. serves as cofactor. In terms of processing, photoregulated by reversible phosphorylation of its threonine residues.

The protein localises to the plastid. The protein resides in the chloroplast thylakoid membrane. Its function is as follows. The light-harvesting complex (LHC) functions as a light receptor, it captures and delivers excitation energy to photosystems with which it is closely associated. Seems involved in the function of the photosystem I in low light conditions, when other LHCA proteins are less abundant. Required, together with LHCA5, for the formation of a full-size NAD(P)H dehydrogenase-photosystem I supercomplex (NDH-PSI) that triggers cyclic and chlororespiratory electron transport in chloroplast thylakoids, especially under stress conditions (e.g. increased light intensity). This is Photosystem I chlorophyll a/b-binding protein 6, chloroplastic from Arabidopsis thaliana (Mouse-ear cress).